The sequence spans 337 residues: Ketol-acid reductoisomerase (NADP(+)) (337 aa).

The KARI N-terminal Rossmann domain maps to 1 to 180 (MQVYYDKDAD…GGTKGGVIET (180 aa)). Residues 24–27 (YGSQ), Arg47, and Ser51 contribute to the NADP(+) site. The active site involves His106. Gly132 is a binding site for NADP(+). Positions 181 to 326 (TFREETETDL…AQLRAMMPWI (146 aa)) constitute a KARI C-terminal knotted domain. The Mg(2+) site is built by Asp189, Glu193, Glu225, and Glu229. Ser250 provides a ligand contact to substrate.

This sequence belongs to the ketol-acid reductoisomerase family. Requires Mg(2+) as cofactor.

It catalyses the reaction (2R)-2,3-dihydroxy-3-methylbutanoate + NADP(+) = (2S)-2-acetolactate + NADPH + H(+). The catalysed reaction is (2R,3R)-2,3-dihydroxy-3-methylpentanoate + NADP(+) = (S)-2-ethyl-2-hydroxy-3-oxobutanoate + NADPH + H(+). Its pathway is amino-acid biosynthesis; L-isoleucine biosynthesis; L-isoleucine from 2-oxobutanoate: step 2/4. It participates in amino-acid biosynthesis; L-valine biosynthesis; L-valine from pyruvate: step 2/4. In terms of biological role, involved in the biosynthesis of branched-chain amino acids (BCAA). Catalyzes an alkyl-migration followed by a ketol-acid reduction of (S)-2-acetolactate (S2AL) to yield (R)-2,3-dihydroxy-isovalerate. In the isomerase reaction, S2AL is rearranged via a Mg-dependent methyl migration to produce 3-hydroxy-3-methyl-2-ketobutyrate (HMKB). In the reductase reaction, this 2-ketoacid undergoes a metal-dependent reduction by NADPH to yield (R)-2,3-dihydroxy-isovalerate. This chain is Ketol-acid reductoisomerase (NADP(+)), found in Neisseria meningitidis serogroup A / serotype 4A (strain DSM 15465 / Z2491).